The primary structure comprises 425 residues: UDP-N-acetylglucosamine 1-carboxyvinyltransferase (425 aa).

22 to 23 contributes to the phosphoenolpyruvate binding site; the sequence is KN. Residue Arg98 coordinates UDP-N-acetyl-alpha-D-glucosamine. The active-site Proton donor is the Cys122. Residue Cys122 is modified to 2-(S-cysteinyl)pyruvic acid O-phosphothioketal. Residues 127–131, Asp313, and Ile335 contribute to the UDP-N-acetyl-alpha-D-glucosamine site; that span reads RPVDQ.

Belongs to the EPSP synthase family. MurA subfamily.

It is found in the cytoplasm. The enzyme catalyses phosphoenolpyruvate + UDP-N-acetyl-alpha-D-glucosamine = UDP-N-acetyl-3-O-(1-carboxyvinyl)-alpha-D-glucosamine + phosphate. The protein operates within cell wall biogenesis; peptidoglycan biosynthesis. Its function is as follows. Cell wall formation. Adds enolpyruvyl to UDP-N-acetylglucosamine. The sequence is that of UDP-N-acetylglucosamine 1-carboxyvinyltransferase from Xylella fastidiosa (strain 9a5c).